Here is a 381-residue protein sequence, read N- to C-terminus: Pentatricopeptide repeat-containing protein 2, mitochondrial (381 aa).

Residues 157-191 form a PPR repeat; it reads DTTSFNITIDMLFNKQLYESGLEVVGEMKKQGVSL.

Belongs to the PTCD2 family.

It localises to the mitochondrion. Involved in mitochondrial RNA maturation and mitochondrial respiratory chain function. This chain is Pentatricopeptide repeat-containing protein 2, mitochondrial (ptcd2), found in Danio rerio (Zebrafish).